We begin with the raw amino-acid sequence, 94 residues long: Phosphoribosyl-ATP pyrophosphatase (94 aa).

The protein belongs to the PRA-PH family.

The protein resides in the cytoplasm. The enzyme catalyses 1-(5-phospho-beta-D-ribosyl)-ATP + H2O = 1-(5-phospho-beta-D-ribosyl)-5'-AMP + diphosphate + H(+). Its pathway is amino-acid biosynthesis; L-histidine biosynthesis; L-histidine from 5-phospho-alpha-D-ribose 1-diphosphate: step 2/9. The polypeptide is Phosphoribosyl-ATP pyrophosphatase (Pyrobaculum arsenaticum (strain DSM 13514 / JCM 11321 / PZ6)).